The sequence spans 196 residues: Phosphoheptose isomerase (196 aa).

The region spanning 36–196 (MAQALQAEGK…LIDQHLFGGA (161 aa)) is the SIS domain. 51 to 53 (NGG) serves as a coordination point for substrate. Positions 60 and 64 each coordinate Zn(2+). Substrate is bound by residues Glu-64, 93-94 (ND), 119-121 (STS), Ser-124, and Gln-174. Residues Gln-174 and His-182 each contribute to the Zn(2+) site.

The protein belongs to the SIS family. GmhA subfamily. As to quaternary structure, homotetramer. Zn(2+) is required as a cofactor.

The protein resides in the cytoplasm. It carries out the reaction 2 D-sedoheptulose 7-phosphate = D-glycero-alpha-D-manno-heptose 7-phosphate + D-glycero-beta-D-manno-heptose 7-phosphate. It functions in the pathway carbohydrate biosynthesis; D-glycero-D-manno-heptose 7-phosphate biosynthesis; D-glycero-alpha-D-manno-heptose 7-phosphate and D-glycero-beta-D-manno-heptose 7-phosphate from sedoheptulose 7-phosphate: step 1/1. In terms of biological role, catalyzes the isomerization of sedoheptulose 7-phosphate in D-glycero-D-manno-heptose 7-phosphate. The sequence is that of Phosphoheptose isomerase from Alkalilimnicola ehrlichii (strain ATCC BAA-1101 / DSM 17681 / MLHE-1).